Here is a 774-residue protein sequence, read N- to C-terminus: Transmembrane GTPase fzo-1 (774 aa).

Residues 1 to 29 are disordered; it reads MSGTASLVHTLPASGDSNHRGLHSLKNSR. The Cytoplasmic segment spans residues 1-617; that stretch reads MSGTASLVHT…EEQAMMTQMV (617 aa). The span at 20–29 shows a compositional bias: basic residues; the sequence is RGLHSLKNSR. A coiled-coil region spans residues 51–71; sequence YGELKDNVAELEGVYKDIKEN. A Dynamin-type G domain is found at 97-352; that stretch reads QRDNMKVVFF…TRALEFQNFE (256 aa). Residues 107–114 are G1 motif; that stretch reads GRTSNGKS. Position 110–115 (110–115) interacts with GTP; the sequence is SNGKST. A G2 motif region spans residues 133-134; the sequence is TT. Residues 211 to 214 form a G3 motif region; it reads DSPG. A GTP-binding site is contributed by 270 to 273; the sequence is NRWD. The tract at residues 270–273 is G4 motif; that stretch reads NRWD. Residue Glu300 is a region of interest, G5 motif. Ser317 is a GTP binding site. Residues 385 to 415 adopt a coiled-coil conformation; it reads NLNSVLTSAAEQRSKLQNNLNESTRTFNECR. Residues 618–638 traverse the membrane as a helical segment; it reads LTSAAFLANGSLGVLVVGGIV. Residues 639–640 are Mitochondrial intermembrane-facing; sequence YK. The chain crosses the membrane as a helical span at residues 641 to 661; sequence AVGWRVIAVGGAAYAGLYAWE. Topologically, residues 662 to 774 are cytoplasmic; it reads RMRWNSGAKE…YLRSDSPPTP (113 aa).

It belongs to the TRAFAC class dynamin-like GTPase superfamily. Dynamin/Fzo/YdjA family. Mitofusin subfamily. In terms of assembly, interacts with ced-9; interaction may be suppressed by interaction of ced-9 with egl-1.

The protein localises to the mitochondrion outer membrane. The catalysed reaction is GTP + H2O = GDP + phosphate + H(+). Probable transmembrane GTPase. Mediates mitochondrial fusion. Fusion of mitochondria occurs in many cell types and constitutes an important step in mitochondria morphology, which is balanced between fusion and fission. Dispensable for normal apoptotic processes during embryonic development. The polypeptide is Transmembrane GTPase fzo-1 (Caenorhabditis elegans).